Here is a 765-residue protein sequence, read N- to C-terminus: MYIIMNDFNGDDFNGDDFHSKTQHLNKLFNLIKSNKEKEFMDYINQLTPDQIDINIRDENGNYMIFFAIIMNSSTILKKLIKYGARLDVFDTEGNSVMYYPIKFGYYEIIDVLIDYDSKIIGISLINIKDHKGSVPLFYAIKYRNKYALQQLLSKDANANYRNNDNVNALHMAVLKKDISMVKLVIKHIKNLNARTRQGSTALHYACNFQLYDITKLLLDNGADQNIIELELDFYPIFYSVIQNDINISKLLVDYGANPNHQDYEGNTILHYCVIYNHMEIFDYIMNNYVIRCRSSDLYIEDINSKADIPRDHIDPNVVNLDGLTVVHLMLYDYKEEYDNFLKKLIPYCNLNYQDNTGNTILHLIAENNIWNKFDNLLNVKKLNIFIRNNNGKTVLDMIQVRYREIFIDTIVKSYYNYLNKYDNGWLLQWQNECSGSNLSEISEKKCLELIRNDVVNNKISLPTKKNKKSITIINDEIVHFSTFTGSLIDTVSGFKYLTKKYPKAASLIIDNQEITSDLQNYYQSIGIQINISQNIVQFEIKWIYQKIFMPIEFENTMQQIILSNKYKYIIFPISIILSSGNHSNGLFYDLEKQVIERFEPHGSDYPNKFNYNPDLLDDILEKKFKIIMSSIYHKNINIRYLRPRDYLPKIGFQTIENTEININKNIGDPNGFCTLWTIWYLDYRLSYADYDPSKLTRNLINEIRVNNYSFRNIIRNYSKKITDLRDYYLNKINRNINDYLNNRLTVNNTRDILRIIVDDDATVI.

9 ANK repeats span residues 60 to 89, 93 to 122, 132 to 161, 165 to 194, 198 to 227, 232 to 261, 265 to 295, 322 to 353, and 357 to 395; these read NGNY…RLDV, EGNS…KIIG, KGSV…NANY, DNVN…NLNA, QGST…DQNI, LDFY…NPNH, EGNT…RCRS, DGLT…NLNY, and TGNT…GKTV.

In Acanthamoeba polyphaga mimivirus (APMV), this protein is Putative ankyrin repeat protein L371.